Reading from the N-terminus, the 235-residue chain is Ubiquinone/menaquinone biosynthesis C-methyltransferase UbiE (235 aa).

Residues threonine 60, aspartate 81, and serine 126 each coordinate S-adenosyl-L-methionine.

Belongs to the class I-like SAM-binding methyltransferase superfamily. MenG/UbiE family.

It carries out the reaction a 2-demethylmenaquinol + S-adenosyl-L-methionine = a menaquinol + S-adenosyl-L-homocysteine + H(+). The catalysed reaction is a 2-methoxy-6-(all-trans-polyprenyl)benzene-1,4-diol + S-adenosyl-L-methionine = a 5-methoxy-2-methyl-3-(all-trans-polyprenyl)benzene-1,4-diol + S-adenosyl-L-homocysteine + H(+). It participates in quinol/quinone metabolism; menaquinone biosynthesis; menaquinol from 1,4-dihydroxy-2-naphthoate: step 2/2. It functions in the pathway cofactor biosynthesis; ubiquinone biosynthesis. Functionally, methyltransferase required for the conversion of demethylmenaquinol (DMKH2) to menaquinol (MKH2) and the conversion of 2-polyprenyl-6-methoxy-1,4-benzoquinol (DDMQH2) to 2-polyprenyl-3-methyl-6-methoxy-1,4-benzoquinol (DMQH2). The sequence is that of Ubiquinone/menaquinone biosynthesis C-methyltransferase UbiE from Geobacter sp. (strain M21).